The sequence spans 281 residues: Transcription factor bHLH79 (281 aa).

The disordered stretch occupies residues 47–167 (FTRSEHSGNK…GQATDRHSLA (121 aa)). 2 stretches are compositionally biased toward basic and acidic residues: residues 77 to 88 (KTRDLNSEDDSS) and 138 to 152 (TEQK…DYIH). The bHLH domain occupies 159 to 209 (QATDRHSLAERARREKISEKMTALQDIIPGCNKIIGKALVLDEIINYIQSL).

In terms of assembly, homodimer.

Its subcellular location is the nucleus. The protein is Transcription factor bHLH79 (BHLH79) of Arabidopsis thaliana (Mouse-ear cress).